Here is a 364-residue protein sequence, read N- to C-terminus: Glycine oxidase (364 aa).

Residues 12-13, 32-33, 40-41, 45-47, and V173 contribute to the FAD site; these read VI, ER, AS, and GGI. R302 lines the substrate pocket. 327-333 contacts FAD; the sequence is HYRNGLV.

It belongs to the DAO family. ThiO subfamily. As to quaternary structure, monomer. The cofactor is FAD.

It carries out the reaction glycine + O2 + H2O = glyoxylate + H2O2 + NH4(+). The catalysed reaction is sarcosine + O2 + H2O = methylamine + glyoxylate + H2O2. Its pathway is cofactor biosynthesis; thiamine diphosphate biosynthesis. Catalyzes the oxidation of glycine, leading to glyoxyl imine and hydrogen peroxide as primary products; glyoxyl imine is used for the biosynthesis of the thiazole ring of thiamine. Otherwise, glyoxyl imine is spontaneously hydrolyzed in water to produce glyoxylate and ammonia. Can also use sarcosine (N-methylglycine) as substrate. In Pseudomonas aeruginosa (strain ATCC 15692 / DSM 22644 / CIP 104116 / JCM 14847 / LMG 12228 / 1C / PRS 101 / PAO1), this protein is Glycine oxidase.